Reading from the N-terminus, the 147-residue chain is Nucleoside diphosphate kinase (147 aa).

ATP-binding residues include K9, F57, R85, T91, R102, and N112. H115 functions as the Pros-phosphohistidine intermediate in the catalytic mechanism.

This sequence belongs to the NDK family. The cofactor is Mg(2+).

It localises to the cytoplasm. It carries out the reaction a 2'-deoxyribonucleoside 5'-diphosphate + ATP = a 2'-deoxyribonucleoside 5'-triphosphate + ADP. It catalyses the reaction a ribonucleoside 5'-diphosphate + ATP = a ribonucleoside 5'-triphosphate + ADP. Its function is as follows. Major role in the synthesis of nucleoside triphosphates other than ATP. The ATP gamma phosphate is transferred to the NDP beta phosphate via a ping-pong mechanism, using a phosphorylated active-site intermediate. This Thermoplasma volcanium (strain ATCC 51530 / DSM 4299 / JCM 9571 / NBRC 15438 / GSS1) protein is Nucleoside diphosphate kinase.